A 269-amino-acid chain; its full sequence is Shikimate dehydrogenase (NADP(+)) (269 aa).

Shikimate is bound by residues 17 to 19 and T64; that span reads SKS. Catalysis depends on K68, which acts as the Proton acceptor. E80 provides a ligand contact to NADP(+). 2 residues coordinate shikimate: N89 and D105. Residues 130 to 134, 154 to 159, and M213 each bind NADP(+); these read GAGGA and NRTRAK. Residue Y215 participates in shikimate binding. G237 provides a ligand contact to NADP(+).

Belongs to the shikimate dehydrogenase family. Homodimer.

It carries out the reaction shikimate + NADP(+) = 3-dehydroshikimate + NADPH + H(+). It participates in metabolic intermediate biosynthesis; chorismate biosynthesis; chorismate from D-erythrose 4-phosphate and phosphoenolpyruvate: step 4/7. Involved in the biosynthesis of the chorismate, which leads to the biosynthesis of aromatic amino acids. Catalyzes the reversible NADPH linked reduction of 3-dehydroshikimate (DHSA) to yield shikimate (SA). This Neisseria meningitidis serogroup B (strain ATCC BAA-335 / MC58) protein is Shikimate dehydrogenase (NADP(+)).